A 188-amino-acid chain; its full sequence is Peptidyl-tRNA hydrolase (188 aa).

F14 serves as a coordination point for tRNA. H19 serves as the catalytic Proton acceptor. The tRNA site is built by Y64, N66, and N112.

This sequence belongs to the PTH family. As to quaternary structure, monomer.

It is found in the cytoplasm. The enzyme catalyses an N-acyl-L-alpha-aminoacyl-tRNA + H2O = an N-acyl-L-amino acid + a tRNA + H(+). Its function is as follows. Hydrolyzes ribosome-free peptidyl-tRNAs (with 1 or more amino acids incorporated), which drop off the ribosome during protein synthesis, or as a result of ribosome stalling. Catalyzes the release of premature peptidyl moieties from peptidyl-tRNA molecules trapped in stalled 50S ribosomal subunits, and thus maintains levels of free tRNAs and 50S ribosomes. The protein is Peptidyl-tRNA hydrolase of Onion yellows phytoplasma (strain OY-M).